The chain runs to 615 residues: UvrABC system protein C (615 aa).

The GIY-YIG domain occupies 12–91; the sequence is EKPGVYIMKD…IKKYKPKYNV (80 aa). A UVR domain is found at 203–238; the sequence is DWLIQKLKEDMKKAAEELRFEEAARIRDQIFAIERT.

It belongs to the UvrC family. In terms of assembly, interacts with UvrB in an incision complex.

The protein resides in the cytoplasm. Functionally, the UvrABC repair system catalyzes the recognition and processing of DNA lesions. UvrC both incises the 5' and 3' sides of the lesion. The N-terminal half is responsible for the 3' incision and the C-terminal half is responsible for the 5' incision. The sequence is that of UvrABC system protein C from Thermoanaerobacter sp. (strain X514).